Consider the following 142-residue polypeptide: Large ribosomal subunit protein uL13 (142 aa).

This sequence belongs to the universal ribosomal protein uL13 family. Part of the 50S ribosomal subunit.

In terms of biological role, this protein is one of the early assembly proteins of the 50S ribosomal subunit, although it is not seen to bind rRNA by itself. It is important during the early stages of 50S assembly. The sequence is that of Large ribosomal subunit protein uL13 from Proteus mirabilis (strain HI4320).